Consider the following 825-residue polypeptide: Actin filament-associated protein 1-like 2 (825 aa).

Y56 carries the post-translational modification Phosphotyrosine. A disordered region spans residues 62 to 163 (VNGEQNSASP…SKGKAAPYQW (102 aa)). A compositionally biased stretch (polar residues) spans 80–94 (PLTNGEPSQHSSAPQ). T113 is modified (phosphothreonine). PH domains follow at residues 175–271 (DARI…EVSG) and 353–447 (SLET…SESG). S408 carries the phosphoserine modification. Y413 carries the phosphotyrosine modification. S484 carries the post-translational modification Phosphoserine. Residues 571–614 (TLTVDPKPGTTPEEPHTESPGDPEVQQRQPEVQESSEPIEPTPR) form a disordered region. Over residues 593 to 608 (PEVQQRQPEVQESSEP) the composition is skewed to low complexity. Positions 657-754 (AEIKLGKNRT…VKDNLKKAEA (98 aa)) form a coiled coil. Residues 757 to 801 (VTLGTTVDTTHLDNMSPRPQPKAATPNPPPDSTPVNSASVLKNRP) form a disordered region. Positions 759-769 (LGTTVDTTHLD) are enriched in polar residues.

As to quaternary structure, interacts with SRC. Interacts with LCK when tyrosine phosphorylated. Post-translationally, tyrosine phosphorylated (by SRC).

The protein resides in the cytoplasm. In terms of biological role, may play a role in a signaling cascade by enhancing the kinase activity of SRC. Contributes to SRC-regulated transcription activation. The protein is Actin filament-associated protein 1-like 2 (Afap1l2) of Mus musculus (Mouse).